The primary structure comprises 839 residues: ABC transporter A family member 7 (839 aa).

A run of 7 helical transmembrane segments spans residues 30 to 50, 238 to 258, 286 to 306, 321 to 341, 352 to 372, 378 to 398, and 419 to 439; these read GVQI…KLWI, IASL…LPLF, IMTF…ISLI, FALF…AFFL, SIFG…LSLF, VFYY…LCGL, and ILFW…YLDK. In terms of domain architecture, ABC transporter spans 525 to 756; it reads LIVQGLRKQF…FGDGYSVRID (232 aa). Residue 559 to 566 coordinates ATP; that stretch reads GPNGAGKT.

This sequence belongs to the ABC transporter superfamily. ABCA family.

It localises to the membrane. The chain is ABC transporter A family member 7 (abcA7) from Dictyostelium discoideum (Social amoeba).